Here is a 246-residue protein sequence, read N- to C-terminus: MSKLTKEASAFFQKNQENTTKEFLKKEFAMDVFSVSLSDIEKEQIENLVVSQNSKFDEEYNRGLASIKLLTGQIKSIQKQHVLLIGEKIYKVREILKNMNSPDTTFSSWINLVFRTKSSAYNALGYYELFISLPDKNTKSLFQSIPYKTAYLLASRKGSVKDKLKVLGKISGLSNALAIDVLNKFLPPLKSSQTERCVDFEEKNKEVSEKLIDILKIVSSGLELSEYNKNLLHQLFEKTLKVDIRC.

This sequence belongs to the UPF0137 (pGP6-D) family.

This Chlamydia psittaci (Chlamydophila psittaci) protein is Virulence plasmid protein pGP6-D.